Reading from the N-terminus, the 442-residue chain is Putative zinc metalloprotease PM1991 (442 aa).

Zn(2+) is bound at residue histidine 21. Glutamate 22 is an active-site residue. Zn(2+) is bound at residue histidine 25. Residues 97–119 (AFVIAAGPIANFLFAILAYFTIY) form a helical membrane-spanning segment. The 89-residue stretch at 198–286 (DWRFDPEKES…FSFVVLTPEL (89 aa)) folds into the PDZ domain. 2 consecutive transmembrane segments (helical) span residues 366-388 (IGLI…MNLF) and 418-440 (LSYR…NDFL).

The protein belongs to the peptidase M50B family. Zn(2+) serves as cofactor.

The protein resides in the cell inner membrane. This chain is Putative zinc metalloprotease PM1991, found in Pasteurella multocida (strain Pm70).